Reading from the N-terminus, the 312-residue chain is Small ribosomal subunit protein uS2 (312 aa).

It belongs to the universal ribosomal protein uS2 family.

This Ruthia magnifica subsp. Calyptogena magnifica protein is Small ribosomal subunit protein uS2.